Here is a 497-residue protein sequence, read N- to C-terminus: Glycerol kinase (497 aa).

Position 11 (Thr-11) interacts with ADP. Residues Thr-11, Ser-12, and Ser-13 each coordinate ATP. Residue Thr-11 coordinates sn-glycerol 3-phosphate. Residue Arg-15 participates in ADP binding. Residues Arg-81, Glu-82, Tyr-133, and Asp-242 each coordinate sn-glycerol 3-phosphate. Positions 81, 82, 133, 242, and 243 each coordinate glycerol. ADP contacts are provided by Thr-264 and Gly-307. The ATP site is built by Thr-264, Gly-307, Gln-311, and Gly-412. Residues Gly-412 and Asn-416 each contribute to the ADP site.

It belongs to the FGGY kinase family.

The catalysed reaction is glycerol + ATP = sn-glycerol 3-phosphate + ADP + H(+). Its pathway is polyol metabolism; glycerol degradation via glycerol kinase pathway; sn-glycerol 3-phosphate from glycerol: step 1/1. Inhibited by fructose 1,6-bisphosphate (FBP). Key enzyme in the regulation of glycerol uptake and metabolism. Catalyzes the phosphorylation of glycerol to yield sn-glycerol 3-phosphate. This is Glycerol kinase from Polaromonas naphthalenivorans (strain CJ2).